Consider the following 334-residue polypeptide: Tryptophan--tRNA ligase (334 aa).

ATP-binding positions include 11–13 (QPS) and 19–20 (GN). The 'HIGH' region signature appears at 12–20 (PSGELTIGN). Residue D135 coordinates L-tryptophan. Residues 147–149 (GED), V186, and 195–199 (KMSKS) each bind ATP. A 'KMSKS' region motif is present at residues 195–199 (KMSKS).

It belongs to the class-I aminoacyl-tRNA synthetase family. As to quaternary structure, homodimer.

It is found in the cytoplasm. It catalyses the reaction tRNA(Trp) + L-tryptophan + ATP = L-tryptophyl-tRNA(Trp) + AMP + diphosphate + H(+). Catalyzes the attachment of tryptophan to tRNA(Trp). Amino acylates tRNA(Trp) with both L- and D-tryptophan, although D-tryptophan is a poor substrate. The protein is Tryptophan--tRNA ligase of Escherichia coli (strain K12).